A 759-amino-acid chain; its full sequence is LPS-assembly protein LptD (759 aa).

The first 22 residues, 1-22 (MPLPIPRLLIPALLLASGASLA), serve as a signal peptide directing secretion.

Belongs to the LptD family. As to quaternary structure, component of the lipopolysaccharide transport and assembly complex. Interacts with LptE and LptA.

It localises to the cell outer membrane. Together with LptE, is involved in the assembly of lipopolysaccharide (LPS) at the surface of the outer membrane. The protein is LPS-assembly protein LptD of Alcanivorax borkumensis (strain ATCC 700651 / DSM 11573 / NCIMB 13689 / SK2).